Here is an 84-residue protein sequence, read N- to C-terminus: MKKLFLGLIWVYQRFISPLTPPSCRFYPTCSNYTKEAIEVHGPIKGAWLGIKRISKCHPLHKGGFDPVPLKKDNNHQHCEHHHH.

It belongs to the UPF0161 family.

Its subcellular location is the cell membrane. Could be involved in insertion of integral membrane proteins into the membrane. In Staphylococcus carnosus (strain TM300), this protein is Putative membrane protein insertion efficiency factor.